The chain runs to 337 residues: MASSSGSKAEFIVGGKYKLVRKIGSGSFGDIYLAINITNGEEVAVKLESQKARHPQLLYESKLYKILQGGVGIPHIRWYGQEKDYNVLVMDLLGPSLEDLFNFCSRRFTMKTVLMLADQMISRIEYVHTKNFIHRDIKPDNFLMGIGRHCNKLFLIDFGLAKKYRDNRTRQHIPYREDKNLTGTARYASINAHLGIEQSRRDDMESLGYVLMYFNRTSLPWQGLKAATKKQKYEKISEKKMSTPVEVLCKGFPAEFAMYLNYCRGLRFEEAPDYMYLRQLFRILFRTLNHQYDYTFDWTMLKQKAAQQAASSSGQGQQAQTPTGKQTDKTKSNMKGF.

Residue alanine 2 is modified to N-acetylalanine. Position 4 is a phosphoserine (serine 4). Position 8 is an N6-acetyllysine (lysine 8). One can recognise a Protein kinase domain in the interval 17-285 (YKLVRKIGSG…YLRQLFRILF (269 aa)). ATP contacts are provided by residues 23–31 (IGSGSFGDI) and lysine 46. Residue aspartate 136 is the Proton acceptor of the active site. Over residues 309–325 (AASSSGQGQQAQTPTGK) the composition is skewed to low complexity. The interval 309–337 (AASSSGQGQQAQTPTGKQTDKTKSNMKGF) is disordered.

Belongs to the protein kinase superfamily. CK1 Ser/Thr protein kinase family. Casein kinase I subfamily. In terms of assembly, interacts with the Axin complex. Interacts with TUT1, leading to TUT1 phosphorylation. Interacts with FAM83A, FAM83B, FAM83C, FAM83D, FAM83E, FAM83F, FAM83G and FAM83H (via DUF1669). Interaction with FAM83H recruits CSNK1A1 to keratin filaments. Phosphorylated by MTOR in response to mitogenic stimulation, leading to its activation.

The protein resides in the cytoplasm. It is found in the cytoskeleton. Its subcellular location is the microtubule organizing center. The protein localises to the centrosome. It localises to the chromosome. The protein resides in the centromere. It is found in the kinetochore. Its subcellular location is the nucleus speckle. The protein localises to the cilium basal body. It localises to the spindle. The enzyme catalyses L-seryl-[protein] + ATP = O-phospho-L-seryl-[protein] + ADP + H(+). It catalyses the reaction L-threonyl-[protein] + ATP = O-phospho-L-threonyl-[protein] + ADP + H(+). In terms of biological role, casein kinases are operationally defined by their preferential utilization of acidic proteins such as caseins as substrates. Can phosphorylate a large number of proteins. Participates in Wnt signaling. Phosphorylates CTNNB1 at 'Ser-45'. May phosphorylate PER1 and PER2. May play a role in segregating chromosomes during mitosis. May play a role in keratin cytoskeleton disassembly and thereby, it may regulate epithelial cell migration. Acts as a positive regulator of mTORC1 and mTORC2 signaling in response to nutrients by mediating phosphorylation of DEPTOR inhibitor. Acts as an inhibitor of NLRP3 inflammasome assembly by mediating phosphorylation of NLRP3. This chain is Casein kinase I isoform alpha (Csnk1a1), found in Mus musculus (Mouse).